The sequence spans 615 residues: Ankyrin repeat and LEM domain-containing protein 1 (615 aa).

ANK repeat units lie at residues 39-71 (DGAA…DPNA), 75-104 (EALT…DPAL), and 108-137 (DGLR…RTRT). The tract at residues 138–210 (RTRIGAETQE…DKHGSSASPP (73 aa)) is disordered. Positions 271-280 (LNARLQALTL) match the Nuclear export signal motif. Over residues 283–294 (PNAAGFQSSPSS) the composition is skewed to polar residues. Positions 283-315 (PNAAGFQSSPSSMPLLDRSPAHSPPRTPTPGAS) are disordered. Residues 355-399 (HLPVSTVSDLELLKGLRALGENPHPITPFTRQLYHQQLEEAQIAP) enclose the LEM domain. One can recognise a GIY-YIG domain in the interval 448-566 (KSSFTYLLLD…ALGIQTLTNQ (119 aa)). The Nuclear localization signal motif lies at 579-586 (PPARRRRL).

In terms of assembly, interacts (via LEM domain) with BANF1; the interaction may favor BANF1 dimerization. As to expression, expression is predominant in adult bone marrow.

The protein resides in the cytoplasm. It is found in the nucleus. Its function is as follows. Endonuclease that probably plays a role in the DNA damage response and DNA repair. The protein is Ankyrin repeat and LEM domain-containing protein 1 (ANKLE1) of Homo sapiens (Human).